The primary structure comprises 186 residues: Putative 3-methyladenine DNA glycosylase (186 aa).

The protein belongs to the DNA glycosylase MPG family.

This Borrelia garinii subsp. bavariensis (strain ATCC BAA-2496 / DSM 23469 / PBi) (Borreliella bavariensis) protein is Putative 3-methyladenine DNA glycosylase.